Here is a 132-residue protein sequence, read N- to C-terminus: Small ribosomal subunit protein uS8 (132 aa).

This sequence belongs to the universal ribosomal protein uS8 family. Part of the 30S ribosomal subunit. Contacts proteins S5 and S12.

In terms of biological role, one of the primary rRNA binding proteins, it binds directly to 16S rRNA central domain where it helps coordinate assembly of the platform of the 30S subunit. This chain is Small ribosomal subunit protein uS8, found in Rickettsia bellii (strain OSU 85-389).